The chain runs to 79 residues: Acyl carrier protein (79 aa).

The region spanning 6–79 is the Carrier domain; sequence KEILDGLAEI…VQDVINYIQK (74 aa). Ser41 is modified (O-(pantetheine 4'-phosphoryl)serine).

The protein belongs to the acyl carrier protein (ACP) family. In terms of processing, 4'-phosphopantetheine is transferred from CoA to a specific serine of apo-ACP by AcpS. This modification is essential for activity because fatty acids are bound in thioester linkage to the sulfhydryl of the prosthetic group.

The protein resides in the cytoplasm. Its pathway is lipid metabolism; fatty acid biosynthesis. In terms of biological role, carrier of the growing fatty acid chain in fatty acid biosynthesis. The polypeptide is Acyl carrier protein (Thermobifida fusca (strain YX)).